The sequence spans 157 residues: Ribosome maturation factor RimP (157 aa).

Belongs to the RimP family.

It localises to the cytoplasm. Its function is as follows. Required for maturation of 30S ribosomal subunits. The chain is Ribosome maturation factor RimP from Lactococcus lactis subsp. lactis (strain IL1403) (Streptococcus lactis).